Reading from the N-terminus, the 68-residue chain is MSGSSSVAAMKKVVQQLRLEAGLNRVKVSQAAADLKQFCLQNAQHDPLLTGVSSSTNPFRPQKVCSFL.

The residue at position 2 (S2) is an N-acetylserine. Phosphoserine is present on S2. Cysteine methyl ester is present on C65. C65 carries the S-geranylgeranyl cysteine lipid modification. A propeptide spans 66–68 (SFL) (removed in mature form).

It belongs to the G protein gamma family. G proteins are composed of 3 units, alpha, beta and gamma. Expressed in a variety of tissues.

The protein resides in the cell membrane. Guanine nucleotide-binding proteins (G proteins) are involved as a modulator or transducer in various transmembrane signaling systems. The beta and gamma chains are required for the GTPase activity, for replacement of GDP by GTP, and for G protein-effector interaction. This chain is Guanine nucleotide-binding protein G(I)/G(S)/G(O) subunit gamma-5 (GNG5), found in Bos taurus (Bovine).